We begin with the raw amino-acid sequence, 119 residues long: Small polypeptide DEVIL 24 (119 aa).

Positions 83–114 are required for DVL/RTFL small polypeptide activity; it reads SFTSKCTSLMKQQHARLCIIRLCATMLLRSYT. Residues 96-113 traverse the membrane as a helical segment; sequence HARLCIIRLCATMLLRSY.

Belongs to the DVL/RTFL small polypeptides family.

It localises to the cell membrane. Small polypeptide acting as a regulatory molecule which coordinates cellular responses required for differentiation, growth and development, probably by restricting polar cell proliferation in lateral organs and coordinating socket cell recruitment and differentiation at trichome sites. The protein is Small polypeptide DEVIL 24 of Arabidopsis thaliana (Mouse-ear cress).